A 185-amino-acid polypeptide reads, in one-letter code: MSERIEAAYRRILQDLGEDPDREGLKDTPARAAKAMRFLTKGYQEDLDQVLNGAVFSSDNDEMVIVRNIELYSLCEHHLLPFIGRAHVAYLPDGKVIGLSKVARIVDMYARRLQIQENLTRQIALAVQQVTGGKGVAVYINARHLCMMMRGVEKQNSEMSTSVMLGDFRENPKTRNEFLQLIRTP.

Residues Cys-75, His-78, and Cys-146 each contribute to the Zn(2+) site.

Belongs to the GTP cyclohydrolase I family. As to quaternary structure, toroid-shaped homodecamer, composed of two pentamers of five dimers.

The catalysed reaction is GTP + H2O = 7,8-dihydroneopterin 3'-triphosphate + formate + H(+). Its pathway is cofactor biosynthesis; 7,8-dihydroneopterin triphosphate biosynthesis; 7,8-dihydroneopterin triphosphate from GTP: step 1/1. The chain is GTP cyclohydrolase 1 from Alkalilimnicola ehrlichii (strain ATCC BAA-1101 / DSM 17681 / MLHE-1).